We begin with the raw amino-acid sequence, 359 residues long: MKSMVKKLKQSLRSGSLEKRKEKEKDIQEEKWFLDNGSIFLKELIADCNGKSIPIRNFSSDQILKATSNFGSSCFVTAEGFYVWYKGIIEDRSYMIKRFSEYKVTQYRVAEVYNEIVLSARMSNHNNFLKLIGFCLEFSLPVLVFEYAEHGVLNHRGGVIVNGEEVILPLSLRLKIGKEIANAVTYLHMAFPKILIHRHIKPRNVFLDENWTPKLSDFSISINLPEGKSRIEVECVQGTIGYLDPVYYTTKMVTEYTDVYSFGVFLMVILTGKPALASTSSDGDYKHIASYVKGFHENGQLDGVIDPKVMEDITSAQKVHVEACVVLALRCCELRDENRPKMIQIAKELKQIETLFRRS.

Residues 1–10 (MKSMVKKLKQ) are compositionally biased toward basic residues. The disordered stretch occupies residues 1 to 20 (MKSMVKKLKQSLRSGSLEKR). The 293-residue stretch at 64–356 (LKATSNFGSS…KELKQIETLF (293 aa)) folds into the Protein kinase domain. ATP is bound by residues 70–78 (FGSSCFVTA) and Lys97.

Belongs to the protein kinase superfamily. Ser/Thr protein kinase family. ZRK subfamily.

This chain is Non-functional pseudokinase ZRK2, found in Arabidopsis thaliana (Mouse-ear cress).